A 220-amino-acid polypeptide reads, in one-letter code: Ribosomal RNA small subunit methyltransferase G (220 aa).

S-adenosyl-L-methionine contacts are provided by residues G82, L87, 137-138 (VE), and R152.

It belongs to the methyltransferase superfamily. RNA methyltransferase RsmG family.

It is found in the cytoplasm. The catalysed reaction is guanosine(527) in 16S rRNA + S-adenosyl-L-methionine = N(7)-methylguanosine(527) in 16S rRNA + S-adenosyl-L-homocysteine. Specifically methylates the N7 position of guanine in position 527 of 16S rRNA. This is Ribosomal RNA small subunit methyltransferase G from Janthinobacterium sp. (strain Marseille) (Minibacterium massiliensis).